A 452-amino-acid chain; its full sequence is UPF0210 protein Csac_1314 (452 aa).

This sequence belongs to the UPF0210 family. As to quaternary structure, homodimer.

In Caldicellulosiruptor saccharolyticus (strain ATCC 43494 / DSM 8903 / Tp8T 6331), this protein is UPF0210 protein Csac_1314.